Here is a 348-residue protein sequence, read N- to C-terminus: Holliday junction branch migration complex subunit RuvB (348 aa).

The segment at 1–181 is large ATPase domain (RuvB-L); the sequence is MEERMITPQQ…FGVISRLEFY (181 aa). ATP contacts are provided by L20, R21, G62, K65, T66, T67, R171, Y181, and R218. T66 is a Mg(2+) binding site. Residues 182–252 are small ATPAse domain (RuvB-S); that stretch reads EVEDLIRIIT…LAGKSLDRLE (71 aa). Residues 255 to 348 are head domain (RuvB-H); the sequence is PAGLDRIDQK…GDSLFDAAED (94 aa). Residues R310 and R315 each contribute to the DNA site. The interval 329–348 is disordered; sequence VNSSHQEGGQGDSLFDAAED.

The protein belongs to the RuvB family. Homohexamer. Forms an RuvA(8)-RuvB(12)-Holliday junction (HJ) complex. HJ DNA is sandwiched between 2 RuvA tetramers; dsDNA enters through RuvA and exits via RuvB. An RuvB hexamer assembles on each DNA strand where it exits the tetramer. Each RuvB hexamer is contacted by two RuvA subunits (via domain III) on 2 adjacent RuvB subunits; this complex drives branch migration. In the full resolvosome a probable DNA-RuvA(4)-RuvB(12)-RuvC(2) complex forms which resolves the HJ.

It localises to the cytoplasm. It carries out the reaction ATP + H2O = ADP + phosphate + H(+). In terms of biological role, the RuvA-RuvB-RuvC complex processes Holliday junction (HJ) DNA during genetic recombination and DNA repair, while the RuvA-RuvB complex plays an important role in the rescue of blocked DNA replication forks via replication fork reversal (RFR). RuvA specifically binds to HJ cruciform DNA, conferring on it an open structure. The RuvB hexamer acts as an ATP-dependent pump, pulling dsDNA into and through the RuvAB complex. RuvB forms 2 homohexamers on either side of HJ DNA bound by 1 or 2 RuvA tetramers; 4 subunits per hexamer contact DNA at a time. Coordinated motions by a converter formed by DNA-disengaged RuvB subunits stimulates ATP hydrolysis and nucleotide exchange. Immobilization of the converter enables RuvB to convert the ATP-contained energy into a lever motion, pulling 2 nucleotides of DNA out of the RuvA tetramer per ATP hydrolyzed, thus driving DNA branch migration. The RuvB motors rotate together with the DNA substrate, which together with the progressing nucleotide cycle form the mechanistic basis for DNA recombination by continuous HJ branch migration. Branch migration allows RuvC to scan DNA until it finds its consensus sequence, where it cleaves and resolves cruciform DNA. This Desulfitobacterium hafniense (strain DSM 10664 / DCB-2) protein is Holliday junction branch migration complex subunit RuvB.